The sequence spans 388 residues: Na(+)/H(+) antiporter NhaA (388 aa).

At 1 to 11 the chain is on the cytoplasmic side; sequence MKHLHRFFSSD. A helical membrane pass occupies residues 12 to 31; sequence ASGGIILIIAAILAMIMANS. Over 32 to 58 the chain is Periplasmic; that stretch reads GATSGWYHDFLETPVQLRVGSLEINKN. Residues 45–58 are important for dimerization; the sequence is PVQLRVGSLEINKN. A helical membrane pass occupies residues 59–80; the sequence is MLLWINDALMAVFFLLVGLEVK. Topologically, residues 81-96 are cytoplasmic; sequence RELMQGSLASLRQAAF. Residues 97–116 traverse the membrane as a helical segment; that stretch reads PVIAAIGGMIVPALLYLAFN. The Periplasmic portion of the chain corresponds to 117–122; the sequence is YADPIT. A helical membrane pass occupies residues 123–130; sequence REGWAIPA. At 131 to 154 the chain is on the cytoplasmic side; the sequence is ATDIAFALGVLALLGSRVPLALKI. A helical transmembrane segment spans residues 155 to 176; sequence FLMALAIIDDLGAIIIIALFYT. Residues 177–180 lie on the Periplasmic side of the membrane; the sequence is NDLS. A helical transmembrane segment spans residues 181-200; that stretch reads MASLGVAAVAIAVLAVLNLC. The Cytoplasmic portion of the chain corresponds to 201 to 204; the sequence is GARR. The chain crosses the membrane as a helical span at residues 205 to 222; that stretch reads TGVYILVGVVLWTAVLKS. A topological domain (periplasmic) is located at residue Gly223. Residues 224–236 traverse the membrane as a helical segment; sequence VHATLAGVIVGFF. The Cytoplasmic portion of the chain corresponds to 237-253; sequence IPLKEKHGRSPAKRLEH. A helical membrane pass occupies residues 254-272; it reads VLHPWVAYLILPLFAFANA. Over 273–286 the chain is Periplasmic; that stretch reads GVSLQGVTLDGLTS. The chain crosses the membrane as a helical span at residues 287-310; the sequence is ILPLGIIAGLLIGKPLGISLFCWL. The Cytoplasmic portion of the chain corresponds to 311 to 339; it reads ALRLKLAHLPEGTTYQQIMVVGILCGIGF. Residues 340 to 350 form a helical membrane-spanning segment; sequence TMSIFIASLAF. Residues 351–357 are Periplasmic-facing; that stretch reads GSVDPEL. A helical transmembrane segment spans residues 358 to 380; it reads INWAKLGILVGSISSAVIGYSWL. The Cytoplasmic portion of the chain corresponds to 381 to 388; it reads RVRLRPSV.

Belongs to the NhaA Na(+)/H(+) (TC 2.A.33) antiporter family. In terms of assembly, monomer. Homodimer. Under routine stress conditions, the monomeric form is fully functional. However, the dimeric form is much more efficient in conferring growth resistance under extreme stress conditions.

The protein localises to the cell inner membrane. It catalyses the reaction Na(+)(in) + 2 H(+)(out) = Na(+)(out) + 2 H(+)(in). The catalysed reaction is Li(+)(in) + 2 H(+)(out) = Li(+)(out) + 2 H(+)(in). With respect to regulation, activity is regulated by pH. Active at alkaline pH. Activity is strongly down-regulated below pH 6.5 and a dramatic increase in activity is observed upon increase of the pH from 6.5 to 8.5. In terms of biological role, na(+)/H(+) antiporter that extrudes sodium in exchange for external protons. Plays an important role in the regulation of intracellular pH, cellular Na(+) content and cell volume. Catalyzes the exchange of 2 H(+) per Na(+). This stoichiometry applies at both neutral and alkaline pH values. In addition, can also transport lithium and is involved in lithium detoxification. Binding of the Li(+) and H(+) ligands to NhaA is coupled and antagonistic. The sequence is that of Na(+)/H(+) antiporter NhaA from Escherichia coli (strain K12).